Here is a 73-residue protein sequence, read N- to C-terminus: UPF0499 protein CHGG_06021 (73 aa).

An N-terminal signal peptide occupies residues 1-20 (MKSSIHVVLFFLLSLVASMA). Intrachain disulfides connect Cys41–Cys55, Cys48–Cys60, and Cys54–Cys69.

It belongs to the UPF0499 family.

The protein localises to the secreted. This is UPF0499 protein CHGG_06021 from Chaetomium globosum (strain ATCC 6205 / CBS 148.51 / DSM 1962 / NBRC 6347 / NRRL 1970) (Soil fungus).